The chain runs to 843 residues: Major vault protein alpha (843 aa).

A2 carries the N-acetylalanine modification. MVP repeat units lie at residues 2 to 56 (ADLN…IPQR), 57 to 111 (NYCT…KVTA), 112 to 163 (LQVV…EEIK), 164 to 216 (ATII…EIVN), 217 to 272 (AYVL…GEVH), 273 to 324 (ITTL…IHNI), 325 to 376 (YVLT…KRES), 377 to 442 (IPLD…STRV), and 443 to 505 (VTYR…FLGP). Positions 643-663 (QEAAARHEAERLEQGARGRLE) are disordered. The span at 646–663 (AARHEAERLEQGARGRLE) shows a compositional bias: basic and acidic residues.

In terms of assembly, the vault ribonucleoprotein particle is a huge (400 A x 670 A) cage structure of 12.9 MDa. It consists of a dimer of half-vaults, with each half-vault comprising 39 identical major vault protein (MVP) chains. Dictyostelium is one of the few organisms in which the major component is actually two proteins (alpha and beta).

The protein resides in the cytoplasm. It is found in the nucleus. Its function is as follows. Unknown, though MVP-alpha is required for normal vault structure. In Dictyostelium discoideum (Social amoeba), this protein is Major vault protein alpha (mvpA).